The sequence spans 329 residues: PDZ and LIM domain protein 1 (329 aa).

At Thr2 the chain carries N-acetylthreonine. A PDZ domain is found at 3-85 (TQQIDLQGPG…NLTLTVARSE (83 aa)). Phosphoserine occurs at positions 90 and 130. At Tyr144 the chain carries Phosphotyrosine. One can recognise an LIM zinc-binding domain in the interval 258-317 (PMCDKCGTGIVGVFVKLRDRHRHPECYVCTDCGTNLKQKGHFFVEDQIYCEKHARERVTP). Positions 260, 263, 280, 283, 286, 289, 307, and 310 each coordinate Zn(2+). Thr316 carries the post-translational modification Phosphothreonine. Phosphotyrosine is present on Tyr321.

As to quaternary structure, interacts with ACTN1, ACTN2 and ACTN4. Interacts with PDLIM4. In terms of tissue distribution, strongly expressed in the heart and skeletal muscle, moderately expressed in the spleen, small intestine, colon, placenta, and lung. A lower level expression is seen in liver, thymus, kidney, prostate and pancreas and is not found in the brain, testis, ovary, and peripheral blood leukocytes.

It localises to the cytoplasm. The protein resides in the cytoskeleton. The protein localises to the myofibril. It is found in the sarcomere. Its subcellular location is the z line. Functionally, cytoskeletal protein that may act as an adapter that brings other proteins (like kinases) to the cytoskeleton. Involved in assembly, disassembly and directioning of stress fibers in fibroblasts. Required for the localization of ACTN1 and PALLD to stress fibers. Required for cell migration and in maintaining cell polarity of fibroblasts. The chain is PDZ and LIM domain protein 1 (PDLIM1) from Homo sapiens (Human).